The following is a 54-amino-acid chain: Large ribosomal subunit protein bL33A (54 aa).

This sequence belongs to the bacterial ribosomal protein bL33 family.

In Mycobacterium bovis (strain ATCC BAA-935 / AF2122/97), this protein is Large ribosomal subunit protein bL33A (rpmG1).